The sequence spans 451 residues: MSKSIINLQSVENQQILSITPPNTGLSLQGTLQIPGDKSISHRALMLGAIAEGETIIAGLLLGEDPRSTAECFRAMGAQISPLNSEKVTIQGIGLGKLQEPLDVLNAGNSGTTMRLMLGLLASHPDRLFCVTGDASLRSRPMSRVIQPLQDMGANIWGRKNNTLAPLAVQGKSLKPIHYHSPIASAQVKSCILLAGLMTDGKTTVTEPALSRDHSERMLQAFGATLDIDSQTNSVTINGHPKLIGQTVIVPGDISSSAFWLVAASIVPGSELLIENVGINPTRTGILEALEMMGADITLENKRILTGEPVADLRVKSCQLKGCTIGGNIIPRLIDEVPILAVAGIFATGKTIIKDAAELRVKESDRLAVMASELTKMGAKITELPDGLEITGGTPLKAAEVDSYTDHRIAMSLAIAALNAKGKTIINRAEAAAISYPKFVETLQQVCGDSN.

The 3-phosphoshikimate site is built by Lys-38, Ser-39, and Arg-43. Lys-38 lines the phosphoenolpyruvate pocket. Residues Gly-111 and Arg-140 each coordinate phosphoenolpyruvate. The 3-phosphoshikimate site is built by Ser-185, Gln-187, Asp-335, and Lys-362. Position 187 (Gln-187) interacts with phosphoenolpyruvate. Asp-335 (proton acceptor) is an active-site residue. Positions 366 and 408 each coordinate phosphoenolpyruvate.

The protein belongs to the EPSP synthase family. As to quaternary structure, monomer.

The protein localises to the cytoplasm. The enzyme catalyses 3-phosphoshikimate + phosphoenolpyruvate = 5-O-(1-carboxyvinyl)-3-phosphoshikimate + phosphate. Its pathway is metabolic intermediate biosynthesis; chorismate biosynthesis; chorismate from D-erythrose 4-phosphate and phosphoenolpyruvate: step 6/7. In terms of biological role, catalyzes the transfer of the enolpyruvyl moiety of phosphoenolpyruvate (PEP) to the 5-hydroxyl of shikimate-3-phosphate (S3P) to produce enolpyruvyl shikimate-3-phosphate and inorganic phosphate. In Crocosphaera subtropica (strain ATCC 51142 / BH68) (Cyanothece sp. (strain ATCC 51142)), this protein is 3-phosphoshikimate 1-carboxyvinyltransferase.